A 498-amino-acid chain; its full sequence is MQTALYISVLIISSCGLVYELLAGTIASYLLGETVTQFSLIIGTYLFSMGVGSWLSKYLEKDLIPKFLEIELAIGLVGGFSSAILYLSFGQIRYFQIPLFLLVILIGILVGLEIPVLLRILKKELQFKELVSRVLSLDYVGALLASILFPIFFAPKLGLMRTGFIFGILNVGVALWGTWVLPLRQSKIIILRAQSVVVLTLLILGFSYSDLITYYSEESLYTDEIILSKQTQYQRIIVTRWKNEIRLFLNGHLQFSSRDEYRYHETLVHPALLAHPTPKKVLVLGGGDGLAVREILKHKNVESVTLVDLDSAITNLFSEHGILKKLNEESLKNSKVTVINTDAFLWLEESDQIFDVVLIDFPDPSNFSLGKLYTTAFFHTLKRRMNETSVLEIQSTSPLFARSSYWCIERTIASLGFYTLPLHVYVPSFGEWGFVLAGQRPIQFKKDFPKDLKFLNIQELESIQTFPQDMSRVPVEINRLDNQALVRYYDREWNRILD.

6 consecutive transmembrane segments (helical) span residues 7-27, 35-55, 67-87, 97-117, 134-154, and 163-183; these read ISVL…GTIA, VTQF…GSWL, FLEI…ILYL, IPLF…IPVL, VLSL…IFFA, and GFIF…VLPL. The tract at residues 196–446 is spermidine synthase; sequence VVVLTLLILG…AGQRPIQFKK (251 aa). Positions 200–439 constitute a PABS domain; the sequence is TLLILGFSYS…GEWGFVLAGQ (240 aa). Residue Gln-234 coordinates S-methyl-5'-thioadenosine. Spermidine is bound by residues His-264 and Asp-288. S-methyl-5'-thioadenosine-binding positions include Asp-308 and 342-343; that span reads DA. The active-site Proton acceptor is the Asp-360.

It belongs to the spermidine/spermine synthase family. As to quaternary structure, homodimer or homotetramer.

It localises to the cell membrane. The catalysed reaction is S-adenosyl 3-(methylsulfanyl)propylamine + putrescine = S-methyl-5'-thioadenosine + spermidine + H(+). The protein operates within amine and polyamine biosynthesis; spermidine biosynthesis; spermidine from putrescine: step 1/1. Catalyzes the irreversible transfer of a propylamine group from the amino donor S-adenosylmethioninamine (decarboxy-AdoMet) to putrescine (1,4-diaminobutane) to yield spermidine. This chain is Polyamine aminopropyltransferase, found in Leptospira interrogans serogroup Icterohaemorrhagiae serovar copenhageni (strain Fiocruz L1-130).